Here is a 314-residue protein sequence, read N- to C-terminus: Coiled-coil domain-containing protein 42 like-2 (314 aa).

Coiled-coil stretches lie at residues 34 to 133 and 175 to 231; these read RLLE…KGTL and NKLL…FQWE.

The protein belongs to the CFAP73 family.

This Xenopus tropicalis (Western clawed frog) protein is Coiled-coil domain-containing protein 42 like-2.